A 632-amino-acid polypeptide reads, in one-letter code: Acyl-coenzyme A oxidase-like protein (632 aa).

376–381 (TGGMGY) is an FAD binding site.

The protein belongs to the acyl-CoA oxidase family. Requires FAD as cofactor.

The sequence is that of Acyl-coenzyme A oxidase-like protein (Acoxl) from Mus musculus (Mouse).